Consider the following 394-residue polypeptide: Putative FNIP repeat-containing protein R636 (394 aa).

FNIP repeat units follow at residues 126-167 (FNKS…FSVY), 168-207 (FDQP…LYFG), and 210-250 (FNQP…IFEA).

This chain is Putative FNIP repeat-containing protein R636, found in Acanthamoeba polyphaga mimivirus (APMV).